The primary structure comprises 141 residues: MLMPKRVKYRREHRGRMKGRAKGGTEVHFGEFGLQALESAWITNRQIEAARRAMTRYMRRGGKVWIRIFPSKPYTAKPLEVRMGSGKGAPEGWVAVVKPGKVMFEVGGVSEEVAREALRLASHKLPIKCKFVKREETGGEA.

It belongs to the universal ribosomal protein uL16 family. In terms of assembly, part of the 50S ribosomal subunit.

In terms of biological role, binds 23S rRNA and is also seen to make contacts with the A and possibly P site tRNAs. In Geobacillus kaustophilus (strain HTA426), this protein is Large ribosomal subunit protein uL16.